Reading from the N-terminus, the 241-residue chain is Tetraspanin-1 (241 aa).

The Cytoplasmic portion of the chain corresponds to 1-11; it reads MGCFNFIKVMM. The helical transmembrane segment at 12-32 threads the bilayer; that stretch reads ILFNMLIFLCGAALLAVGIWV. Over 33-52 the chain is Extracellular; it reads SVDGPSFVKIFGPMSSSAMQ. A helical transmembrane segment spans residues 53–73; the sequence is FVNVGYFLIAAGAVLFALGFL. Over 74 to 88 the chain is Cytoplasmic; sequence GCYGAQTESKCALMT. Residues 89–109 form a helical membrane-spanning segment; sequence FFFILLLIFIAEVAAAVVALV. Residues 110 to 211 lie on the Extracellular side of the membrane; that stretch reads YTTLAENFLT…KQLLYDIRTN (102 aa). Asn141, Asn154, Asn167, Asn180, Asn189, and Asn194 each carry an N-linked (GlcNAc...) asparagine glycan. A helical membrane pass occupies residues 212-232; the sequence is AVTVGGVAAGIGGLELAAMIV. At 233–241 the chain is on the cytoplasmic side; sequence SMYLYCNLE.

This sequence belongs to the tetraspanin (TM4SF) family. Interacts with SLC19A2. Interacts with NTRK1/TRKA.

The protein localises to the lysosome membrane. Structural component of specialized membrane microdomains known as tetraspanin-enriched microdomains (TERMs), which act as platforms for receptor clustering and signaling. Participates thereby in diverse biological functions such as cell signal transduction, adhesion, migration and protein trafficking. Regulates neuronal differentiation in response to NGF by facilitating NGF-mediated activation of NTRK1/TRKA receptor tyrosine kinase and subsequent downstream signaling pathways. Plays a role in the inhibition of TNFalpha-induced apoptosis. Mechanistically, inhibits the NF-kappa-B signaling pathway by blocking phosphorylation of CHUK. Also promotes the stability of the thiamine transporter 1/SLC19A2 in intestinal epithelial cells leading to an increase of thiamine uptake process. This chain is Tetraspanin-1 (TSPAN1), found in Bos taurus (Bovine).